The following is a 120-amino-acid chain: Insoluble matrix shell protein 2 (120 aa).

Residues 1-20 (MHQSSLGVLVLFSLIYLCIS) form the signal peptide.

In terms of tissue distribution, component of the acid-insoluble organic matrix of the calcified shell.

The protein localises to the secreted. The chain is Insoluble matrix shell protein 2 from Ruditapes philippinarum (Japanese carpet shell).